The chain runs to 351 residues: Large ribosomal subunit protein uL3 (351 aa).

Disordered regions lie at residues 1–31 (MGHR…TPRT) and 246–271 (KGSR…GQLG).

The protein belongs to the universal ribosomal protein uL3 family. As to quaternary structure, part of the 50S ribosomal subunit. Forms a cluster with proteins L14 and L24e.

Its function is as follows. One of the primary rRNA binding proteins, it binds directly near the 3'-end of the 23S rRNA, where it nucleates assembly of the 50S subunit. This is Large ribosomal subunit protein uL3 from Saccharolobus islandicus (strain M.16.27) (Sulfolobus islandicus).